The sequence spans 356 residues: Holliday junction branch migration complex subunit RuvB (356 aa).

The tract at residues 4-191 (TDKLATEQRI…FGIVARLEFY (188 aa)) is large ATPase domain (RuvB-L). ATP-binding positions include L30, R31, G72, K75, T76, T77, 138–140 (EDY), R181, Y191, and R228. Mg(2+) is bound at residue T76. A small ATPAse domain (RuvB-S) region spans residues 192–262 (DADQLSRIVR…VADAALAMLD (71 aa)). The interval 265 to 356 (PVGFDLMDRK…RDEWDTPDGK (92 aa)) is head domain (RuvB-H). Positions 301, 320, and 325 each coordinate DNA.

Belongs to the RuvB family. As to quaternary structure, homohexamer. Forms an RuvA(8)-RuvB(12)-Holliday junction (HJ) complex. HJ DNA is sandwiched between 2 RuvA tetramers; dsDNA enters through RuvA and exits via RuvB. An RuvB hexamer assembles on each DNA strand where it exits the tetramer. Each RuvB hexamer is contacted by two RuvA subunits (via domain III) on 2 adjacent RuvB subunits; this complex drives branch migration. In the full resolvosome a probable DNA-RuvA(4)-RuvB(12)-RuvC(2) complex forms which resolves the HJ.

It is found in the cytoplasm. It carries out the reaction ATP + H2O = ADP + phosphate + H(+). Its function is as follows. The RuvA-RuvB-RuvC complex processes Holliday junction (HJ) DNA during genetic recombination and DNA repair, while the RuvA-RuvB complex plays an important role in the rescue of blocked DNA replication forks via replication fork reversal (RFR). RuvA specifically binds to HJ cruciform DNA, conferring on it an open structure. The RuvB hexamer acts as an ATP-dependent pump, pulling dsDNA into and through the RuvAB complex. RuvB forms 2 homohexamers on either side of HJ DNA bound by 1 or 2 RuvA tetramers; 4 subunits per hexamer contact DNA at a time. Coordinated motions by a converter formed by DNA-disengaged RuvB subunits stimulates ATP hydrolysis and nucleotide exchange. Immobilization of the converter enables RuvB to convert the ATP-contained energy into a lever motion, pulling 2 nucleotides of DNA out of the RuvA tetramer per ATP hydrolyzed, thus driving DNA branch migration. The RuvB motors rotate together with the DNA substrate, which together with the progressing nucleotide cycle form the mechanistic basis for DNA recombination by continuous HJ branch migration. Branch migration allows RuvC to scan DNA until it finds its consensus sequence, where it cleaves and resolves cruciform DNA. This Burkholderia cenocepacia (strain ATCC BAA-245 / DSM 16553 / LMG 16656 / NCTC 13227 / J2315 / CF5610) (Burkholderia cepacia (strain J2315)) protein is Holliday junction branch migration complex subunit RuvB.